The sequence spans 160 residues: Cytochrome b6-f complex subunit 4 (160 aa).

3 helical membrane passes run 36-56, 95-115, and 131-151; these read LLYIFPVVILGTIACNVGLAV, LLGVLLMVSVPAGLLTVPFLE, and TVFLIGTAVALWLGIGATLPI.

This sequence belongs to the cytochrome b family. PetD subfamily. The 4 large subunits of the cytochrome b6-f complex are cytochrome b6, subunit IV (17 kDa polypeptide, petD), cytochrome f and the Rieske protein, while the 4 small subunits are petG, petL, petM and petN. The complex functions as a dimer.

It is found in the plastid. It localises to the chloroplast thylakoid membrane. Functionally, component of the cytochrome b6-f complex, which mediates electron transfer between photosystem II (PSII) and photosystem I (PSI), cyclic electron flow around PSI, and state transitions. The protein is Cytochrome b6-f complex subunit 4 of Morus indica (Mulberry).